The chain runs to 359 residues: DNA replication and repair protein RecF (359 aa).

Residue 30–37 coordinates ATP; it reads GPNGSGKT.

The protein belongs to the RecF family.

Its subcellular location is the cytoplasm. Its function is as follows. The RecF protein is involved in DNA metabolism; it is required for DNA replication and normal SOS inducibility. RecF binds preferentially to single-stranded, linear DNA. It also seems to bind ATP. This chain is DNA replication and repair protein RecF, found in Aliivibrio salmonicida (strain LFI1238) (Vibrio salmonicida (strain LFI1238)).